The primary structure comprises 343 residues: N(4)-bis(aminopropyl)spermidine synthase (343 aa).

The protein belongs to the branched-chain polyamine synthase family.

It is found in the cytoplasm. It carries out the reaction 2 S-adenosyl 3-(methylsulfanyl)propylamine + spermidine = N(4)-bis(aminopropyl)spermidine + 2 S-methyl-5'-thioadenosine + 2 H(+). The protein operates within amine and polyamine biosynthesis. Involved in the biosynthesis of branched-chain polyamines, which support the growth of thermophiles under high-temperature conditions. Catalyzes the sequential condensation of spermidine with the aminopropyl groups of decarboxylated S-adenosylmethionines to produce N(4)-bis(aminopropyl)spermidine via N(4)-aminopropylspermidine. The sequence is that of N(4)-bis(aminopropyl)spermidine synthase from Thermus thermophilus.